The following is a 397-amino-acid chain: DnaJ protein homolog 1 (397 aa).

Positions K1–Y52 constitute a J domain. The CR-type zinc-finger motif lies at G114–K198. 4 CXXCXGXG motif repeats span residues C127–G134, C143–G150, C170–G177, and C186–K193. Positions M367–Q397 are disordered. At C394 the chain carries Cysteine methyl ester. C394 carries the S-farnesyl cysteine lipid modification. Residues A395–Q397 constitute a propeptide, removed in mature form.

It is found in the membrane. Functionally, plays a continuous role in plant development probably in the structural organization of compartments. The protein is DnaJ protein homolog 1 (DNAJ1) of Allium porrum (Leek).